An 81-amino-acid chain; its full sequence is UPF0410 protein YwzA (81 aa).

3 helical membrane passes run 1–21 (MSFL…SLFV), 27–47 (GGII…HGLL), and 56–76 (GFAI…VSLL).

Belongs to the UPF0410 family.

It is found in the cell membrane. In Bacillus subtilis (strain 168), this protein is UPF0410 protein YwzA (ywzA).